Reading from the N-terminus, the 875-residue chain is DNA mismatch repair protein MutS (875 aa).

626-633 (GPNMAGKS) serves as a coordination point for ATP. The disordered stretch occupies residues 830-855 (RAAPPPPAPAAPKTSPVEERLREIQP). Residues 845–855 (PVEERLREIQP) are compositionally biased toward basic and acidic residues.

The protein belongs to the DNA mismatch repair MutS family.

Its function is as follows. This protein is involved in the repair of mismatches in DNA. It is possible that it carries out the mismatch recognition step. This protein has a weak ATPase activity. This Cereibacter sphaeroides (strain ATCC 17023 / DSM 158 / JCM 6121 / CCUG 31486 / LMG 2827 / NBRC 12203 / NCIMB 8253 / ATH 2.4.1.) (Rhodobacter sphaeroides) protein is DNA mismatch repair protein MutS.